The sequence spans 461 residues: V-type ATP synthase beta chain 1 (461 aa).

It belongs to the ATPase alpha/beta chains family.

Its function is as follows. Produces ATP from ADP in the presence of a proton gradient across the membrane. The V-type beta chain is a regulatory subunit. This chain is V-type ATP synthase beta chain 1, found in Clostridium tetani (strain Massachusetts / E88).